The following is a 382-amino-acid chain: Acetylserotonin O-methyltransferase (382 aa).

S-adenosyl-L-homocysteine contacts are provided by Gly-218, Asp-241, Asp-261, Met-262, and Lys-275. His-279 functions as the Proton acceptor in the catalytic mechanism. Catalysis depends on residues Glu-308 and Glu-347.

Belongs to the class I-like SAM-binding methyltransferase superfamily. Cation-independent O-methyltransferase family.

It localises to the cytoplasm. It carries out the reaction N-acetylserotonin + S-adenosyl-L-methionine = melatonin + S-adenosyl-L-homocysteine + H(+). It functions in the pathway aromatic compound metabolism; melatonin biosynthesis; melatonin from serotonin: step 1/2. In terms of biological role, methyltransferase which catalyzes the transfer of a methyl group onto N-acetylserotonin, producing melatonin (N-acetyl-5-methoxytryptamine). Does not seem to possess caffeate O-methyltransferase activity. Implicated in melatonin-dependent circadian dynamics of stomatal aperture to minimize night water loss and promote drought tolerance. Prevents seed germination by promoting melatonin biosynthesis. Promotes melatonin-triggered defense responses to the necrotrophic fungus Botrytis cinerea. (Microbial infection) Promotes melatonin-triggered defense responses to the necrotrophic fungus Botrytis cinerea. In Arabidopsis thaliana (Mouse-ear cress), this protein is Acetylserotonin O-methyltransferase.